A 2346-amino-acid polypeptide reads, in one-letter code: Highly reducing polyketide synthase claI (2346 aa).

The region spanning Thr-10 to Asp-412 is the Ketosynthase family 3 (KS3) domain. Active-site for beta-ketoacyl synthase activity residues include Cys-183, His-295, and His-335. The tract at residues Ile-530 to Glu-842 is malonyl-CoA:ACP transacylase (MAT) domain. Residue Ser-622 is the For malonyltransferase activity of the active site. The tract at residues His-912 to Ser-1048 is N-terminal hotdog fold. The tract at residues His-912 to Asp-1213 is dehydratase (DH) domain. The PKS/mFAS DH domain maps to His-912 to Gln-1218. Residue His-944 is the Proton acceptor; for dehydratase activity of the active site. The interval Ile-1060–Gln-1218 is C-terminal hotdog fold. Asp-1124 (proton donor; for dehydratase activity) is an active-site residue. The enoyl reductase (ER) domain stretch occupies residues Gly-1633–Ile-1946. The interval Thr-1972–Ala-2151 is ketoreductase (KR) domain. The Carrier domain occupies Ser-2258–Val-2336. Ser-2296 bears the O-(pantetheine 4'-phosphoryl)serine mark.

Pantetheine 4'-phosphate is required as a cofactor.

Its pathway is secondary metabolite biosynthesis. Its function is as follows. Highly reducing polyketide synthase; part of the cla gene cluster that produces clavatol and ortho-quinone methide. The clavatol biosynthesis cluster cla and the terrestric acid cluster tra are both involved in the production of peniphenones and penilactones. The non-reducing PKS claF is responsible for the formation of clavatol from successive condensations of 3 malonyl-CoA units, presumably with a simple acetyl-CoA starter unit, and 2 methylation steps. The esterase claE probably collaborates with claF by catalyzing the hydrolysis of ACP-bound acyl intermediates to free the ACP from stalled intermediates. The clavatol oxidase claD then converts clavatol to hydroxyclavatol. Spontaneous dehydration of hydroxyclavatol leads to the accumulation of the highly active ortho-quinone methide. On the other hand, the PKS-NRPS hybrid traA is involved in the formation of crustosic acid, with the help of traB and traD. The polyketide synthase module (PKS) of traA is responsible for the synthesis of the polyketide backbone via the condensation of an acetyl-CoA starter unit with 3 malonyl-CoA units. The downstream nonribosomal peptide synthetase (NRPS) module then amidates the carboxyl end of the polyketide with L-malic acid. Because traA lacks a designated enoylreductase (ER) domain, the required activity is provided the enoyl reductase traG. Crustosic acid undergoes decarboxylation and isomerization to the terrestric acid, catalyzed by the 2-oxoglutarate-dependent dioxygenase traH. Both acids are further converted to the 2 gamma-butyrolactones (R)-5-methyltetronic acid and (S)-5-carboxylmethyltetronic acid, with involvement of the cytochrome P450 monooxygenase claJ. Spontaneous addition of the methide to these gamma-butyrolactones leads to peniphenone D and penilactone D, which undergo again stereospecific attacking by methide to give penilactones A and B. The function of the highly reducing polyketide synthase claI has not been investigated yet. This chain is Highly reducing polyketide synthase claI, found in Penicillium crustosum (Blue mold fungus).